A 431-amino-acid polypeptide reads, in one-letter code: Gamma-glutamyl phosphate reductase (431 aa).

Belongs to the gamma-glutamyl phosphate reductase family.

Its subcellular location is the cytoplasm. It carries out the reaction L-glutamate 5-semialdehyde + phosphate + NADP(+) = L-glutamyl 5-phosphate + NADPH + H(+). Its pathway is amino-acid biosynthesis; L-proline biosynthesis; L-glutamate 5-semialdehyde from L-glutamate: step 2/2. In terms of biological role, catalyzes the NADPH-dependent reduction of L-glutamate 5-phosphate into L-glutamate 5-semialdehyde and phosphate. The product spontaneously undergoes cyclization to form 1-pyrroline-5-carboxylate. This is Gamma-glutamyl phosphate reductase from Beijerinckia indica subsp. indica (strain ATCC 9039 / DSM 1715 / NCIMB 8712).